We begin with the raw amino-acid sequence, 360 residues long: Mannose-1-phosphate guanylyltransferase catalytic subunit beta (360 aa).

The interval 2–222 (KALILVGGYG…QGFWMDIGQP (221 aa)) is substrate-binding domain. Residue D110 coordinates GDP-alpha-D-mannose. D110 lines the Mg(2+) pocket. Residue K162 is part of the active site. D218 contacts GDP-alpha-D-mannose. D218 lines the Mg(2+) pocket. The tract at residues 245-360 (HVGPGFIGNV…ESVPEPRIIM (116 aa)) is hexapeptide repeat domain.

The protein belongs to the transferase hexapeptide repeat family. As to quaternary structure, component of the GMPPA-GMPPB mannose-1-phosphate guanylyltransferase complex composed of 4 gmppa subunits and 8 gmppb subunits; the complex is organized into three layers, a central layer made up of 2 gmppa dimers sandwiched between two layers each made up of 2 gmppb dimers. Catalytic activity of gmppb is reduced when part of the complex and binding of GDP-alpha-D-Mannose by gmppa induces allosteric feedback inhibition of gmppb. Requires Mg(2+) as cofactor.

The catalysed reaction is alpha-D-mannose 1-phosphate + GTP + H(+) = GDP-alpha-D-mannose + diphosphate. It functions in the pathway nucleotide-sugar biosynthesis; GDP-alpha-D-mannose biosynthesis; GDP-alpha-D-mannose from alpha-D-mannose 1-phosphate (GTP route): step 1/1. Enzyme activity is reduced by incorporation into the GMPPA-GMPPB mannose-1-phosphate guanylyltransferase complex. Allosterically inhibited, when part of the GMPPA-GMPPB complex, by GDP-alpha-D-mannose binding to GMPPA. Functionally, catalytic subunit of the GMPPA-GMPPB mannose-1-phosphate guanylyltransferase complex. Catalyzes the formation of GDP-mannose, an essential precursor of glycan moieties of glycoproteins and glycolipids. Can catalyze the reverse reaction in vitro. Together with GMPPA regulates GDP-alpha-D-mannose levels. This is Mannose-1-phosphate guanylyltransferase catalytic subunit beta (gmppb) from Xenopus tropicalis (Western clawed frog).